The following is a 497-amino-acid chain: Protein root UVB sensitive 6 (497 aa).

This sequence belongs to the RUS1 family.

In terms of biological role, required for normal embryo development. The protein is Protein root UVB sensitive 6 of Arabidopsis thaliana (Mouse-ear cress).